The chain runs to 1804 residues: Collagen alpha-1(XI) chain (1804 aa).

The N-terminal stretch at 1–34 (MEPWSRWKTKRWIWDLTISTLVLTFLFQAREVRG) is a signal peptide. The propeptide at 35 to 511 (AAPVDILKAL…SKGPTISAQE (477 aa)) is N-terminal propeptide. Intrachain disulfides connect cysteine 60–cysteine 242 and cysteine 181–cysteine 235. The Laminin G-like domain occupies 70–242 (DIAYRVTEEA…DYCDHYSPDC (173 aa)). A nonhelical region region spans residues 229–417 (KAAYDYCDHY…DFTETSINGH (189 aa)). N-linked (GlcNAc...) asparagine glycosylation is present at asparagine 351. Residues 418–506 (GAYGEKGQKG…YGGDGSKGPT (89 aa)) are triple-helical region (interrupted). Residues 437 to 506 (LVEGPPGPAG…YGGDGSKGPT (70 aa)) form a disordered region. The 49-residue stretch at 440-488 (GPPGPAGPAGLMGPPGLQGPSGLPGDPGDRGPPGRPGLPGADGLPGPPG) folds into the Collagen-like 1 domain. Low complexity-rich tracts occupy residues 447–465 (PAGL…LPGD) and 477–494 (LPGA…LMLP). The interval 507 to 509 (ISA) is short nonhelical segment. The segment at 510–527 (QEAQAQAILQQARIALRG) is telopeptide. The interval 526–1560 (RGPPGPMGLT…KTRRHTESIQ (1035 aa)) is disordered. The interval 528-1540 (PPGPMGLTGR…PGPPGPPGEV (1013 aa)) is triple-helical region. 4 Collagen-like domains span residues 530–584 (GPMG…GADG), 581–639 (GADG…EIGP), 607–664 (PGDK…PGQP), and 641–698 (GLPG…GPQG). Gly residues-rich tracts occupy residues 539 to 548 (GPVGGPGSAG) and 581 to 590 (GADGGRGMPG). Lysine 610 is modified (allysine). Residues 639 to 655 (PRGLPGEAGPRGLLGPR) are compositionally biased toward low complexity. Residues 697 to 708 (QGLPGPQGPIGP) show a composition bias toward pro residues. Residues 715–726 (QGKPGLAGLPGA) show a composition bias toward low complexity. Positions 746–804 (GPPGPQGPIGYPGPRGVKGADGVRGLKGSKGEKGEDGFPGFKGDMGLKGDRGEVGQVGP) constitute a Collagen-like 6 domain. Residues 805 to 814 (RGEDGPEGPK) show a composition bias toward basic and acidic residues. Low complexity-rich tracts occupy residues 873–901 (KPGP…PGPK), 916–925 (RGPQGPQGPV), and 969–979 (PQGPTGETGPI). Positions 1040-1049 (GLKGGEGPQG) are enriched in gly residues. Over residues 1074–1083 (RPGPQGPPGP) the composition is skewed to pro residues. Residues 1084-1108 (AGEKGAPGEKGPQGPAGRDGVQGPV) show a composition bias toward low complexity. Over residues 1160–1169 (GIAGGDGEAG) the composition is skewed to gly residues. 2 stretches are compositionally biased toward pro residues: residues 1216–1227 (MGPPGPPGPRGP) and 1341–1360 (QPGP…PGKR). Composition is skewed to low complexity over residues 1383–1392 (AEGPPGKTGP) and 1417–1426 (QGLPGAAGQD). Collagen-like domains lie at 1391-1449 (GPVG…SKGE), 1442-1492 (GDPG…PGPA), and 1481-1539 (GAKG…PPGE). The span at 1428 to 1437 (PPGPLGPPGL) shows a compositional bias: pro residues. An Allysine modification is found at lysine 1450. Low complexity predominate over residues 1453–1462 (PGLIGLIGPP). Residues 1481 to 1490 (GAKGDGGIPG) are compositionally biased toward gly residues. Pro residues predominate over residues 1491–1507 (PAGPIGPPGPPGLPGPA). Low complexity predominate over residues 1509–1519 (PKGNKGSSGPT). Over residues 1528 to 1537 (PGPPGPPGPP) the composition is skewed to pro residues. A nonhelical region (C-terminal) region spans residues 1541–1561 (IQPLPILSPKKTRRHTESIQA). A propeptide spans 1562–1804 (DAGDNILDYS…FEVGPACFLG (243 aa)) (C-terminal propeptide). The 229-residue stretch at 1575–1803 (EEIFGSLNSL…GFEVGPACFL (229 aa)) folds into the Fibrillar collagen NC1 domain. A disulfide bond links cysteine 1605 and cysteine 1637. The Ca(2+) site is built by aspartate 1623, asparagine 1625, glutamine 1626, cysteine 1628, and aspartate 1631. N-linked (GlcNAc...) asparagine glycosylation is found at asparagine 1638 and asparagine 1707. 2 disulfides stabilise this stretch: cysteine 1646–cysteine 1801 and cysteine 1712–cysteine 1755.

It belongs to the fibrillar collagen family. In terms of assembly, trimers composed of three different chains: alpha 1(XI), alpha 2(XI), and alpha 3(XI). Alpha 3(XI) is probably a post-translational modification of alpha 1(II). Prolines at the third position of the tripeptide repeating unit (G-X-Y) are hydroxylated in some or all of the chains. In terms of processing, N-glycosylated.

The protein resides in the secreted. It localises to the extracellular space. It is found in the extracellular matrix. In terms of biological role, may play an important role in fibrillogenesis by controlling lateral growth of collagen II fibrils. This Rattus norvegicus (Rat) protein is Collagen alpha-1(XI) chain (Col11a1).